A 189-amino-acid chain; its full sequence is Cell division protein SepF (189 aa).

Disordered regions lie at residues 1–75 (MEGQ…GLPG) and 155–174 (STPS…SPTP).

Belongs to the SepF family. As to quaternary structure, homodimer. Interacts with FtsZ.

The protein localises to the cytoplasm. Cell division protein that is part of the divisome complex and is recruited early to the Z-ring. Probably stimulates Z-ring formation, perhaps through the cross-linking of FtsZ protofilaments. Its function overlaps with FtsA. This is Cell division protein SepF from Synechococcus sp. (strain JA-3-3Ab) (Cyanobacteria bacterium Yellowstone A-Prime).